A 246-amino-acid chain; its full sequence is UDP-N-acetyl-D-mannosaminuronic acid transferase (246 aa).

Belongs to the glycosyltransferase 26 family.

The catalysed reaction is UDP-N-acetyl-alpha-D-mannosaminouronate + N-acetyl-alpha-D-glucosaminyl-di-trans,octa-cis-undecaprenyl diphosphate = beta-D-ManNAcA-(1-&gt;4)-alpha-D-GlcNAc-di-trans,octa-cis-undecaprenyl diphosphate + UDP + H(+). The protein operates within bacterial outer membrane biogenesis; enterobacterial common antigen biosynthesis. Catalyzes the synthesis of Und-PP-GlcNAc-ManNAcA (Lipid II), the second lipid-linked intermediate involved in enterobacterial common antigen (ECA) synthesis. This is UDP-N-acetyl-D-mannosaminuronic acid transferase from Serratia proteamaculans (strain 568).